Here is a 209-residue protein sequence, read N- to C-terminus: Uridine kinase (209 aa).

12–19 (GGSGGGKT) is a binding site for ATP.

Belongs to the uridine kinase family.

It is found in the cytoplasm. The enzyme catalyses uridine + ATP = UMP + ADP + H(+). It carries out the reaction cytidine + ATP = CMP + ADP + H(+). Its pathway is pyrimidine metabolism; CTP biosynthesis via salvage pathway; CTP from cytidine: step 1/3. The protein operates within pyrimidine metabolism; UMP biosynthesis via salvage pathway; UMP from uridine: step 1/1. This Streptococcus agalactiae serotype III (strain NEM316) protein is Uridine kinase.